Here is a 325-residue protein sequence, read N- to C-terminus: uncharacterized protein (325 aa).

The disordered stretch occupies residues 1 to 32 (MKQEYIPLDEFPNKSNEGMLNDEGTSSSGLST). Positions 23–32 (EGTSSSGLST) are enriched in low complexity. Positions 135–223 (AEEISNLKTS…LKKREDLLRL (89 aa)) form a coiled coil.

Its subcellular location is the cytoplasm. The protein localises to the cytoskeleton. It localises to the microtubule organizing center. The protein resides in the spindle pole body. This is an uncharacterized protein from Schizosaccharomyces pombe (strain 972 / ATCC 24843) (Fission yeast).